Consider the following 240-residue polypeptide: MADS-box protein SVP (240 aa).

In terms of domain architecture, MADS-box spans 3 to 57 (REKIQIRKIDNATARQVTFSKRRRGLFKKAEELSVLCDADVALIIFSSTGKLFEF). A K-box domain is found at 87–180 (QLVENSDHAR…GTQLTEENER (94 aa)). The tract at residues 202–240 (VYEEGQSSESITNAGNSTGAPVDSESSDTSLRLGLPYGG) is disordered. Positions 206 to 220 (GQSSESITNAGNSTG) are enriched in polar residues.

Forms a heterodimer with AP1 and SVP. Interacts with the SEU-LUG corepressor complex when complexed to AP1. Interacts with AGL15. Interacts with AGL16. Detected in roots and leaves. Expressed at very low levels in flowers and siliques. Present in floral meristems.

The protein localises to the nucleus. In terms of biological role, transcription repressor that inhibit floral transition in the autonomous flowering pathway, independent of photoperiod and temperature. Acts in a dosage-dependent manner. Together with AGL24 and AP1, controls the identity of the floral meristem and regulates expression of class B, C and E genes. Promotes EFM expression to suppress flowering. In Arabidopsis thaliana (Mouse-ear cress), this protein is MADS-box protein SVP.